The primary structure comprises 489 residues: Glucose-1-phosphate adenylyltransferase small subunit, chloroplastic/amyloplastic (489 aa).

A chloroplast-targeting transit peptide spans 1–52 (ITVPSTSSKNLQNSLAFSSSSLSGDKIQTTSFLNRRYCRISSRAPIVVSPKA).

This sequence belongs to the bacterial/plant glucose-1-phosphate adenylyltransferase family. As to quaternary structure, heterotetramer. In terms of tissue distribution, prominently expressed in the leaves. A lower level expression is seen in the roots.

Its subcellular location is the plastid. It is found in the chloroplast. The protein localises to the amyloplast. It carries out the reaction alpha-D-glucose 1-phosphate + ATP + H(+) = ADP-alpha-D-glucose + diphosphate. The protein operates within glycan biosynthesis; starch biosynthesis. Activated by 3'phosphoglycerate, inhibited by orthophosphate. Allosteric regulation. Its function is as follows. This protein plays a role in synthesis of starch. It catalyzes the synthesis of the activated glycosyl donor, ADP-glucose from Glc-1-P and ATP. The polypeptide is Glucose-1-phosphate adenylyltransferase small subunit, chloroplastic/amyloplastic (AGPB1) (Beta vulgaris (Sugar beet)).